Consider the following 32-residue polypeptide: Photosystem II reaction center protein T (32 aa).

The helical transmembrane segment at Ala3–Phe23 threads the bilayer.

This sequence belongs to the PsbT family. In terms of assembly, PSII is composed of 1 copy each of membrane proteins PsbA, PsbB, PsbC, PsbD, PsbE, PsbF, PsbH, PsbI, PsbJ, PsbK, PsbL, PsbM, PsbT, PsbY, PsbZ, Psb30/Ycf12, at least 3 peripheral proteins of the oxygen-evolving complex and a large number of cofactors. It forms dimeric complexes.

It localises to the plastid. Its subcellular location is the chloroplast thylakoid membrane. Functionally, found at the monomer-monomer interface of the photosystem II (PS II) dimer, plays a role in assembly and dimerization of PSII. PSII is a light-driven water plastoquinone oxidoreductase, using light energy to abstract electrons from H(2)O, generating a proton gradient subsequently used for ATP formation. The sequence is that of Photosystem II reaction center protein T from Psilotum nudum (Whisk fern).